A 297-amino-acid chain; its full sequence is Ribosomal protein L11 methyltransferase (297 aa).

The S-adenosyl-L-methionine site is built by threonine 150, glycine 171, aspartate 193, and asparagine 233.

It belongs to the methyltransferase superfamily. PrmA family.

It localises to the cytoplasm. It carries out the reaction L-lysyl-[protein] + 3 S-adenosyl-L-methionine = N(6),N(6),N(6)-trimethyl-L-lysyl-[protein] + 3 S-adenosyl-L-homocysteine + 3 H(+). Methylates ribosomal protein L11. The sequence is that of Ribosomal protein L11 methyltransferase from Laribacter hongkongensis (strain HLHK9).